The following is a 75-amino-acid chain: Small ribosomal subunit protein bS16 (75 aa).

This sequence belongs to the bacterial ribosomal protein bS16 family.

This Campylobacter fetus subsp. fetus (strain 82-40) protein is Small ribosomal subunit protein bS16.